The sequence spans 353 residues: Glutamine synthetase cytosolic isozyme 1-5 (353 aa).

N-acetylthreonine is present on Thr2. Ser3 carries the phosphoserine modification. In terms of domain architecture, GS beta-grasp spans 19–99 (IIAEYIWIGG…VMCDAYRPAG (81 aa)). Residues 106–353 (NRHKAVKIFD…TSMIAETTIL (248 aa)) enclose the GS catalytic domain.

This sequence belongs to the glutamine synthetase family. As to quaternary structure, homooctamer. As to expression, not expressed in roots.

It is found in the cytoplasm. The catalysed reaction is L-glutamate + NH4(+) + ATP = L-glutamine + ADP + phosphate + H(+). The chain is Glutamine synthetase cytosolic isozyme 1-5 (GLN1-5) from Arabidopsis thaliana (Mouse-ear cress).